A 307-amino-acid polypeptide reads, in one-letter code: Nicotinamide/nicotinic acid mononucleotide adenylyltransferase 2 (307 aa).

2 residues coordinate NAD(+): Ser-16 and Phe-17. His-24 provides a ligand contact to ATP. NAD(+) contacts are provided by Trp-92 and Thr-95. Residues Cys-164 and Cys-165 are each lipidated (S-palmitoyl cysteine). Gly-200, Asp-202, Leu-212, Trp-213, and Arg-232 together coordinate NAD(+). 271–274 (TKSR) contributes to the ATP binding site.

It belongs to the eukaryotic NMN adenylyltransferase family. Monomer. The cofactor is Mg(2+). Degraded in response to injured neurite. Degradation is caused by polyubiquitination by MYCBP2 after recognition by FBXO45. In terms of processing, palmitoylated; palmitoylation is required for membrane association.

Its subcellular location is the golgi apparatus membrane. It is found in the cytoplasmic vesicle membrane. It localises to the cytoplasm. The protein resides in the cell projection. The protein localises to the axon. It carries out the reaction beta-nicotinamide D-ribonucleotide + ATP + H(+) = diphosphate + NAD(+). The enzyme catalyses nicotinate beta-D-ribonucleotide + ATP + H(+) = deamido-NAD(+) + diphosphate. The protein operates within cofactor biosynthesis; NAD(+) biosynthesis; NAD(+) from nicotinamide D-ribonucleotide: step 1/1. It functions in the pathway cofactor biosynthesis; NAD(+) biosynthesis; deamido-NAD(+) from nicotinate D-ribonucleotide: step 1/1. With respect to regulation, inhibited by P1-(adenosine-5')-P3-(nicotinamide-riboside-5')-triphosphate (Np3AD) and P1-(adenosine-5')-P4-(nicotinamide-riboside-5')-tetraphosphate (Np4AD). In terms of biological role, nicotinamide/nicotinate-nucleotide adenylyltransferase that acts as an axon maintenance factor. Axon survival factor required for the maintenance of healthy axons: acts by delaying Wallerian axon degeneration, an evolutionarily conserved process that drives the loss of damaged axons. Catalyzes the formation of NAD(+) from nicotinamide mononucleotide (NMN) and ATP. Can also use the deamidated form; nicotinic acid mononucleotide (NaMN) as substrate but with a lower efficiency. Cannot use triazofurin monophosphate (TrMP) as substrate. Also catalyzes the reverse reaction, i.e. the pyrophosphorolytic cleavage of NAD(+). For the pyrophosphorolytic activity prefers NAD(+), NADH and NaAD as substrates and degrades nicotinic acid adenine dinucleotide phosphate (NHD) less effectively. Fails to cleave phosphorylated dinucleotides NADP(+), NADPH and NaADP(+). Also acts as an activator of ADP-ribosylation by supporting the catalytic activity of PARP16 and promoting mono-ADP-ribosylation of ribosomes by PARP16. May be involved in the maintenance of axonal integrity. The protein is Nicotinamide/nicotinic acid mononucleotide adenylyltransferase 2 (NMNAT2) of Pongo abelii (Sumatran orangutan).